The following is a 131-amino-acid chain: Holo-[acyl-carrier-protein] synthase (131 aa).

Positions 8 and 62 each coordinate Mg(2+).

This sequence belongs to the P-Pant transferase superfamily. AcpS family. The cofactor is Mg(2+).

It localises to the cytoplasm. The enzyme catalyses apo-[ACP] + CoA = holo-[ACP] + adenosine 3',5'-bisphosphate + H(+). Functionally, transfers the 4'-phosphopantetheine moiety from coenzyme A to a Ser of acyl-carrier-protein. This is Holo-[acyl-carrier-protein] synthase from Delftia acidovorans (strain DSM 14801 / SPH-1).